We begin with the raw amino-acid sequence, 423 residues long: uncharacterized protein (423 aa).

This is an uncharacterized protein from Pasteurella multocida (strain Pm70).